The sequence spans 296 residues: Phosphatidylglycerol--prolipoprotein diacylglyceryl transferase (296 aa).

The next 3 helical transmembrane spans lie at 17–37 (LAVRWYGLMYLVGFIAAIVVG), 59–79 (MMFYGVLGTVLGGRLGYVLFY), and 97–117 (GGMSFHGGFLGVTLAMMLFAW). Arg-142 contacts a 1,2-diacyl-sn-glycero-3-phospho-(1'-sn-glycerol). The next 2 membrane-spanning stretches (helical) occupy residues 230-250 (MGAVSALFLIGYGLARFTVEF) and 257-277 (FLGLLALGLSMGQWLSLPMIL).

The protein belongs to the Lgt family.

It localises to the cell inner membrane. It catalyses the reaction L-cysteinyl-[prolipoprotein] + a 1,2-diacyl-sn-glycero-3-phospho-(1'-sn-glycerol) = an S-1,2-diacyl-sn-glyceryl-L-cysteinyl-[prolipoprotein] + sn-glycerol 1-phosphate + H(+). It functions in the pathway protein modification; lipoprotein biosynthesis (diacylglyceryl transfer). In terms of biological role, catalyzes the transfer of the diacylglyceryl group from phosphatidylglycerol to the sulfhydryl group of the N-terminal cysteine of a prolipoprotein, the first step in the formation of mature lipoproteins. The chain is Phosphatidylglycerol--prolipoprotein diacylglyceryl transferase from Burkholderia lata (strain ATCC 17760 / DSM 23089 / LMG 22485 / NCIMB 9086 / R18194 / 383).